The chain runs to 367 residues: MTSTQRTLMVMAGGTGGHVFPGLAVAHRMQAQGWRVVWLGSPAGMEATLVPRHGIPMEYVRFGGLRGKGLATKFALPFNLLRACAQSLRALRRVKPDVVLGMGGYITFPAGLVTVLTGRPLVLHEQNSIAGLTNKVLAKLAKRVLVAFPGALPNAEWTGNPIRTELARTEPPQARYAARSGKLRLLVVGGSLGAAALNEVVPRALALLAPDERPQVVHQAGAKHIDTLKENYEAAGLSCGSDVALVPFIDDMASAYANADLVICRSGAMTVAEIAAVGVAALFVPFPHAVDDHQTTNAEFLAEQGAAVLVQQRDLSAELLADWLRGQSRDSLAAMAERSRSLAKPDATDEVARVCAAVAGANLEGKQ.

Residues 15 to 17 (TGG), asparagine 127, arginine 163, serine 191, isoleucine 249, and glutamine 294 each bind UDP-N-acetyl-alpha-D-glucosamine.

The protein belongs to the glycosyltransferase 28 family. MurG subfamily.

Its subcellular location is the cell inner membrane. The enzyme catalyses di-trans,octa-cis-undecaprenyl diphospho-N-acetyl-alpha-D-muramoyl-L-alanyl-D-glutamyl-meso-2,6-diaminopimeloyl-D-alanyl-D-alanine + UDP-N-acetyl-alpha-D-glucosamine = di-trans,octa-cis-undecaprenyl diphospho-[N-acetyl-alpha-D-glucosaminyl-(1-&gt;4)]-N-acetyl-alpha-D-muramoyl-L-alanyl-D-glutamyl-meso-2,6-diaminopimeloyl-D-alanyl-D-alanine + UDP + H(+). It participates in cell wall biogenesis; peptidoglycan biosynthesis. Its function is as follows. Cell wall formation. Catalyzes the transfer of a GlcNAc subunit on undecaprenyl-pyrophosphoryl-MurNAc-pentapeptide (lipid intermediate I) to form undecaprenyl-pyrophosphoryl-MurNAc-(pentapeptide)GlcNAc (lipid intermediate II). The sequence is that of UDP-N-acetylglucosamine--N-acetylmuramyl-(pentapeptide) pyrophosphoryl-undecaprenol N-acetylglucosamine transferase from Burkholderia pseudomallei (strain 1106a).